A 101-amino-acid chain; its full sequence is Urease subunit beta (101 aa).

Belongs to the urease beta subunit family. Heterotrimer of UreA (gamma), UreB (beta) and UreC (alpha) subunits. Three heterotrimers associate to form the active enzyme.

It localises to the cytoplasm. The enzyme catalyses urea + 2 H2O + H(+) = hydrogencarbonate + 2 NH4(+). It functions in the pathway nitrogen metabolism; urea degradation; CO(2) and NH(3) from urea (urease route): step 1/1. The chain is Urease subunit beta from Ectopseudomonas mendocina (strain ymp) (Pseudomonas mendocina).